The primary structure comprises 404 residues: Phosphoglycerate kinase (404 aa).

Substrate is bound by residues 22–24, R37, 60–63, R119, and R156; these read DLN and HLGR. ATP contacts are provided by residues K206, G302, E333, and 359–362; that span reads GGDS.

Belongs to the phosphoglycerate kinase family. In terms of assembly, monomer.

The protein resides in the cytoplasm. The enzyme catalyses (2R)-3-phosphoglycerate + ATP = (2R)-3-phospho-glyceroyl phosphate + ADP. Its pathway is carbohydrate degradation; glycolysis; pyruvate from D-glyceraldehyde 3-phosphate: step 2/5. The sequence is that of Phosphoglycerate kinase from Clavibacter michiganensis subsp. michiganensis (strain NCPPB 382).